The chain runs to 475 residues: Putative F-box protein At1g46840 (475 aa).

The F-box domain maps to Thr25–Phe71. Low complexity predominate over residues Ser423–Ser433. A disordered region spans residues Ser423–His475. Positions Ile451–Glu464 are enriched in basic and acidic residues. Basic residues predominate over residues Arg465–His475.

This Arabidopsis thaliana (Mouse-ear cress) protein is Putative F-box protein At1g46840.